Consider the following 380-residue polypeptide: MSLSDWHLAVKLADQPLAPKSILRLPETELGEYSLGGYSISFLKQLIAGKLQESVPDPELIDLIYCGRKLKDDQTLDFYGIQPGSTVHVLRKSWPEPDQKPEPVDKVAALREFRVLHTALHSSSSYREAVFKMLSNKESLDQIIVATPGLSSDPIALGVLQDKDLFSVFADPNMLDTLVPAHPALVNAIVLVLHSVAGSTPMPGADSSSRGMPSSAYRDMPGGFLFEGLSDDEDDFHPSARSTPSSSTPSSRPASLGYSGAAGPRPITQSELATALALASTPESSSHTPTPGTQGQSSGTSPMSSSVQSGTPITNDLFSQALQHALQASGQPSLQSQWQPQLQQLRDMGIQDDELSLRALQATGGDIQAALELIFAGGAP.

One can recognise a Ubiquitin-like domain in the interval 18 to 98; sequence APKSILRLPE…VLRKSWPEPD (81 aa). Residues 201 to 313 are disordered; it reads PMPGADSSSR…SSSVQSGTPI (113 aa). Position 230 is a phosphoserine (Ser230). Composition is skewed to low complexity over residues 239–255 and 270–312; these read SARSTPSSSTPSSRPAS and SELA…SGTP. A UBA domain is found at 333 to 377; sequence SLQSQWQPQLQQLRDMGIQDDELSLRALQATGGDIQAALELIFAG.

As to quaternary structure, binds ubiquitin. Interacts with MAVS; this interaction enhances TRIM21-dependent 'Lys-27'-linked polyubiquitination of MAVS. Post-translationally, deubiquitinated by OTUD4 which stabilizes UBL7 expression.

Functionally, interferon-stimulated protein that positively regulates RNA virus-triggered innate immune signaling. Mechanistically, promotes 'Lys-27'-linked polyubiquitination of MAVS through TRIM21 leading to enhanced the IFN signaling pathway. The chain is Ubiquitin-like protein 7 (UBL7) from Bos taurus (Bovine).